The primary structure comprises 45 residues: Unknown protein from spots 23/28/205 of 2D-PAGE of thylakoid (45 aa).

Its subcellular location is the plastid. The protein localises to the chloroplast thylakoid. The sequence is that of Unknown protein from spots 23/28/205 of 2D-PAGE of thylakoid from Pisum sativum (Garden pea).